Here is a 316-residue protein sequence, read N- to C-terminus: Pantothenate kinase (316 aa).

95–102 (GSVAVGKS) is an ATP binding site.

It belongs to the prokaryotic pantothenate kinase family.

The protein resides in the cytoplasm. The catalysed reaction is (R)-pantothenate + ATP = (R)-4'-phosphopantothenate + ADP + H(+). Its pathway is cofactor biosynthesis; coenzyme A biosynthesis; CoA from (R)-pantothenate: step 1/5. This chain is Pantothenate kinase, found in Serratia proteamaculans (strain 568).